Consider the following 345-residue polypeptide: GTPase Obg (345 aa).

The Obg domain occupies 1–159; the sequence is MHFLDQAKIF…MWVWLRLKLL (159 aa). Positions 121-142 are disordered; that stretch reads GDGGRGNASYKTSTNRAPRQHG. An OBG-type G domain is found at 160–327; the sequence is ADCGLVGLPN…VLDKIIEILG (168 aa). GTP-binding positions include 166-173, 191-195, 212-215, 279-282, and 308-310; these read GLPNAGKS, FTTIR, DIPG, NKID, and SGA. Mg(2+) contacts are provided by S173 and T193.

This sequence belongs to the TRAFAC class OBG-HflX-like GTPase superfamily. OBG GTPase family. As to quaternary structure, monomer. Mg(2+) serves as cofactor.

The protein localises to the cytoplasm. An essential GTPase which binds GTP, GDP and possibly (p)ppGpp with moderate affinity, with high nucleotide exchange rates and a fairly low GTP hydrolysis rate. Plays a role in control of the cell cycle, stress response, ribosome biogenesis and in those bacteria that undergo differentiation, in morphogenesis control. The polypeptide is GTPase Obg (Rhizorhabdus wittichii (strain DSM 6014 / CCUG 31198 / JCM 15750 / NBRC 105917 / EY 4224 / RW1) (Sphingomonas wittichii)).